Reading from the N-terminus, the 408-residue chain is Acetate kinase (408 aa).

Asn-7 contacts Mg(2+). Lys-14 lines the ATP pocket. Arg-91 serves as a coordination point for substrate. Asp-148 (proton donor/acceptor) is an active-site residue. ATP contacts are provided by residues 208–212 (HLGNG), 283–285 (DFR), and 331–335 (GIGEN). Glu-384 is a binding site for Mg(2+).

It belongs to the acetokinase family. Homodimer. Mg(2+) serves as cofactor. The cofactor is Mn(2+).

Its subcellular location is the cytoplasm. The enzyme catalyses acetate + ATP = acetyl phosphate + ADP. It participates in metabolic intermediate biosynthesis; acetyl-CoA biosynthesis; acetyl-CoA from acetate: step 1/2. Its activity is regulated as follows. Inhibited by diethylpyrocarbonate, hydroxylamine and phenylglyoxal. In terms of biological role, catalyzes the formation of acetyl phosphate from acetate and ATP. Can also catalyze the reverse reaction. Can also phosphorylate propionate, but has very low activity toward butyrate. In Methanosarcina thermophila, this protein is Acetate kinase.